A 129-amino-acid polypeptide reads, in one-letter code: NADH-quinone oxidoreductase subunit A (129 aa).

The next 3 helical transmembrane spans lie at 14–34, 67–87, and 95–115; these read LAIHVALSAGIVAAIIVVAAW, FLIAALFVIFDMEAAILFAWA, and WLGLIEAAVFIGVLLLALVYL.

Belongs to the complex I subunit 3 family. As to quaternary structure, NDH-1 is composed of 14 different subunits. Subunits NuoA, H, J, K, L, M, N constitute the membrane sector of the complex.

Its subcellular location is the cell inner membrane. The enzyme catalyses a quinone + NADH + 5 H(+)(in) = a quinol + NAD(+) + 4 H(+)(out). Functionally, NDH-1 shuttles electrons from NADH, via FMN and iron-sulfur (Fe-S) centers, to quinones in the respiratory chain. The immediate electron acceptor for the enzyme in this species is believed to be ubiquinone. Couples the redox reaction to proton translocation (for every two electrons transferred, four hydrogen ions are translocated across the cytoplasmic membrane), and thus conserves the redox energy in a proton gradient. The polypeptide is NADH-quinone oxidoreductase subunit A (Rhodopseudomonas palustris (strain BisB5)).